Here is a 91-residue protein sequence, read N- to C-terminus: Large ribosomal subunit protein uL23c (91 aa).

The protein belongs to the universal ribosomal protein uL23 family. As to quaternary structure, part of the 50S ribosomal subunit.

It localises to the plastid. Its subcellular location is the chloroplast. Functionally, binds to 23S rRNA. The chain is Large ribosomal subunit protein uL23c (rpl23) from Picea abies (Norway spruce).